The chain runs to 852 residues: G-type lectin S-receptor-like serine/threonine-protein kinase At4g03230 (852 aa).

The signal sequence occupies residues 1–19 (MILSVFFYMFLLHIRRLDC). Residues 20 to 154 (FVAVQDSKTL…GNEANVVWQS (135 aa)) enclose the Bulb-type lectin domain. Topologically, residues 20 to 444 (FVAVQDSKTL…RGRGRYGEAK (425 aa)) are extracellular. N-linked (GlcNAc...) asparagine glycans are attached at residues Asn37, Asn59, Asn171, Asn187, Asn234, and Asn243. The region spanning 285–321 (PRDECSVYNACGNFGSCNSKNEEMCKCLPGFRPNFLE) is the EGF-like domain. 2 disulfides stabilise this stretch: Cys289–Cys301 and Cys295–Cys309. Residues 339–426 (CGKDGVVVGD…SRNVFIRVAV (88 aa)) enclose the PAN domain. Residue Asn352 is glycosylated (N-linked (GlcNAc...) asparagine). 2 disulfides stabilise this stretch: Cys373/Cys400 and Cys377/Cys383. Residues 445-465 (TPVVLIIVVTFTSAAILVVLS) traverse the membrane as a helical segment. Residues 466–852 (STASYVFLQR…ELTITLEDGR (387 aa)) are Cytoplasmic-facing. The region spanning 532 to 819 (FSNANKLGQG…TLPTPKQPAF (288 aa)) is the Protein kinase domain. ATP is bound by residues 538 to 546 (LGQGGFGPV) and Lys560. Position 566 is a phosphoserine (Ser566). Residues 621–638 (KLCQRLDWKMRCNIILGI) are caM-binding. Catalysis depends on Asp657, which acts as the Proton acceptor. Phosphoserine occurs at positions 661 and 674. Thr691 carries the phosphothreonine modification. A disordered region spans residues 826 to 852 (SSSKASSSTKPETCSENELTITLEDGR). Phosphoserine occurs at positions 831 and 840. Polar residues predominate over residues 834–845 (TKPETCSENELT). Thr847 carries the post-translational modification Phosphothreonine.

This sequence belongs to the protein kinase superfamily. Ser/Thr protein kinase family.

Its subcellular location is the cell membrane. It catalyses the reaction L-seryl-[protein] + ATP = O-phospho-L-seryl-[protein] + ADP + H(+). The catalysed reaction is L-threonyl-[protein] + ATP = O-phospho-L-threonyl-[protein] + ADP + H(+). This Arabidopsis thaliana (Mouse-ear cress) protein is G-type lectin S-receptor-like serine/threonine-protein kinase At4g03230.